Here is a 183-residue protein sequence, read N- to C-terminus: uncharacterized protein (183 aa).

A signal peptide spans 1-17 (MVLFILVLYTCIQDGNG).

This is an uncharacterized protein from Saccharomyces cerevisiae (strain ATCC 204508 / S288c) (Baker's yeast).